The chain runs to 281 residues: Diaminopimelate epimerase (281 aa).

Substrate is bound by residues N13, Q46, and N66. The active-site Proton donor is the C75. Substrate contacts are provided by residues 76 to 77 (GN), N160, N193, and 211 to 212 (ER). C220 functions as the Proton acceptor in the catalytic mechanism. 221–222 (GT) provides a ligand contact to substrate.

It belongs to the diaminopimelate epimerase family. As to quaternary structure, homodimer.

The protein localises to the cytoplasm. It catalyses the reaction (2S,6S)-2,6-diaminopimelate = meso-2,6-diaminopimelate. It participates in amino-acid biosynthesis; L-lysine biosynthesis via DAP pathway; DL-2,6-diaminopimelate from LL-2,6-diaminopimelate: step 1/1. Catalyzes the stereoinversion of LL-2,6-diaminopimelate (L,L-DAP) to meso-diaminopimelate (meso-DAP), a precursor of L-lysine and an essential component of the bacterial peptidoglycan. In Acinetobacter baylyi (strain ATCC 33305 / BD413 / ADP1), this protein is Diaminopimelate epimerase.